The sequence spans 113 residues: RING-box protein 2 (113 aa).

The tract at residues 1–26 is disordered; it reads MADVEDGEETCALASHSGSSGSKSGG. N-acetylalanine is present on alanine 2. At threonine 10 the chain carries Phosphothreonine; by CK2. Residues cysteine 50, cysteine 53, cysteine 61, cysteine 64, cysteine 73, cysteine 80, histidine 82, histidine 85, cysteine 87, cysteine 88, cysteine 99, and cysteine 102 each contribute to the Zn(2+) site. The segment at 61–103 adopts an RING-type zinc-finger fold; that stretch reads CLRCQAENKQEDCVVVWGECNHSFHNCCMSLWVKQNNRCPLCQ.

The protein belongs to the RING-box family. In terms of assembly, catalytic component of multiple cullin-5-RING E3 ubiquitin-protein ligase complexes (ECS complexes, also named CRL5 complexes) composed of CUL5, Elongin BC (ELOB and ELOC), RNF7/RBX2 and a variable SOCS box domain-containing protein as substrate-specific recognition component. Also interacts (with lower preference) with CUL1, CUL2, CUL3, CUL4A and CUL4B; additional evidence is however required to confirm this result in vivo. Interacts with UBE2F. Interacts with CSNK2B, the interaction is not affected by phosphorylation by CK2. May also interact with DCUN1D1, DCUN1D2, DCUN1D3, DCUN1D4 and DCUN1D5. As to quaternary structure, (Microbial infection) Following infection by HIV-1 virus, component of a cullin-5-RING E3 ubiquitin-protein ligase complex (ECS complex) hijacked by the HIV-1 Vif protein. Phosphorylation at Thr-10 by CK2 promotes its degradation by the proteasome. Expressed in heart, liver, skeletal muscle and pancreas. At very low levels expressed in brain, placenta and lung.

The protein resides in the cytoplasm. It localises to the nucleus. It catalyses the reaction S-ubiquitinyl-[E2 ubiquitin-conjugating enzyme]-L-cysteine + [acceptor protein]-L-lysine = [E2 ubiquitin-conjugating enzyme]-L-cysteine + N(6)-ubiquitinyl-[acceptor protein]-L-lysine.. It carries out the reaction S-[NEDD8-protein]-yl-[E2 NEDD8-conjugating enzyme]-L-cysteine + [cullin]-L-lysine = [E2 NEDD8-conjugating enzyme]-L-cysteine + N(6)-[NEDD8-protein]-yl-[cullin]-L-lysine.. The protein operates within protein modification; protein ubiquitination. It participates in protein modification; protein neddylation. Catalytic component of multiple cullin-5-RING E3 ubiquitin-protein ligase complexes (ECS complexes), which mediate the ubiquitination and subsequent proteasomal degradation of target proteins. It is thereby involved in various biological processes, such as cell cycle progression, signal transduction and transcription. The functional specificity of the E3 ubiquitin-protein ligase ECS complexes depend on the variable SOCS box-containing substrate recognition component. Within ECS complexes, RNF7/RBX2 recruits the E2 ubiquitination enzyme to the complex via its RING-type and brings it into close proximity to the substrate. Catalytic subunit of various SOCS-containing ECS complexes, such as the ECS(SOCS7) complex, that regulate reelin signaling by mediating ubiquitination and degradation of DAB1. The ECS(SOCS2) complex mediates the ubiquitination and subsequent proteasomal degradation of phosphorylated EPOR and GHR. Promotes ubiquitination and degradation of NF1, thereby regulating Ras protein signal transduction. As part of the ECS(ASB9) complex, catalyzes ubiquitination and degradation of CKB. The ECS(SPSB3) complex catalyzes ubiquitination of nuclear CGAS. As part of the ECS(RAB40C) complex, mediates ANKRD28 ubiquitination and degradation, thereby inhibiting protein phosphatase 6 (PP6) complex activity and focal adhesion assembly during cell migration. As part of some ECS complex, catalyzes 'Lys-11'-linked ubiquitination and degradation of BTRC. ECS complexes and ARIH2 collaborate in tandem to mediate ubiquitination of target proteins; ARIH2 mediating addition of the first ubiquitin on CRLs targets. Specifically catalyzes the neddylation of CUL5 via its interaction with UBE2F. Does not catalyze neddylation of other cullins (CUL1, CUL2, CUL3, CUL4A or CUL4B). May play a role in protecting cells from apoptosis induced by redox agents. In terms of biological role, inactive. Its function is as follows. (Microbial infection) Following infection by HIV-1 virus, catalytic component of a cullin-5-RING E3 ubiquitin-protein ligase complex (ECS complex) hijacked by the HIV-1 Vif protein, which catalyzes ubiquitination and degradation of APOBEC3F and APOBEC3G. This chain is RING-box protein 2, found in Homo sapiens (Human).